A 441-amino-acid chain; its full sequence is Dihydroorotase (441 aa).

Zn(2+) is bound by residues H77 and H79. Residues 79 to 81 (HFR) and N111 each bind substrate. D167, H194, and H248 together coordinate Zn(2+). N294 contributes to the substrate binding site. A Zn(2+)-binding site is contributed by D321. Residue D321 is part of the active site. Residues H325 and 339–340 (FG) contribute to the substrate site.

The protein belongs to the metallo-dependent hydrolases superfamily. DHOase family. Class I DHOase subfamily. Zn(2+) serves as cofactor.

The catalysed reaction is (S)-dihydroorotate + H2O = N-carbamoyl-L-aspartate + H(+). It participates in pyrimidine metabolism; UMP biosynthesis via de novo pathway; (S)-dihydroorotate from bicarbonate: step 3/3. Catalyzes the reversible cyclization of carbamoyl aspartate to dihydroorotate. The sequence is that of Dihydroorotase from Wolbachia sp. subsp. Drosophila simulans (strain wRi).